We begin with the raw amino-acid sequence, 498 residues long: Glycerol kinase (498 aa).

Thr11 provides a ligand contact to ADP. Residues Thr11, Ser12, and Ser13 each coordinate ATP. A sn-glycerol 3-phosphate-binding site is contributed by Thr11. Arg15 is a binding site for ADP. The sn-glycerol 3-phosphate site is built by Arg81, Glu82, Tyr133, and Asp242. Residues Arg81, Glu82, Tyr133, Asp242, and Gln243 each contribute to the glycerol site. Residues Thr264 and Gly307 each contribute to the ADP site. Residues Thr264, Gly307, Gln311, and Gly412 each coordinate ATP. Residues Gly412 and Asn416 each coordinate ADP.

The protein belongs to the FGGY kinase family.

The catalysed reaction is glycerol + ATP = sn-glycerol 3-phosphate + ADP + H(+). It participates in polyol metabolism; glycerol degradation via glycerol kinase pathway; sn-glycerol 3-phosphate from glycerol: step 1/1. With respect to regulation, inhibited by fructose 1,6-bisphosphate (FBP). Key enzyme in the regulation of glycerol uptake and metabolism. Catalyzes the phosphorylation of glycerol to yield sn-glycerol 3-phosphate. The sequence is that of Glycerol kinase from Acidovorax ebreus (strain TPSY) (Diaphorobacter sp. (strain TPSY)).